Here is a 635-residue protein sequence, read N- to C-terminus: 4-hydroxy-3-methylbut-2-enyl diphosphate reductase (635 aa).

A 4-hydroxy-3-methylbut-2-enyl diphosphate reductase region spans residues M1–K279. C12 provides a ligand contact to [4Fe-4S] cluster. (2E)-4-hydroxy-3-methylbut-2-enyl diphosphate contacts are provided by H42 and H77. Dimethylallyl diphosphate is bound by residues H42 and H77. Isopentenyl diphosphate-binding residues include H42 and H77. C99 is a [4Fe-4S] cluster binding site. Residue H127 coordinates (2E)-4-hydroxy-3-methylbut-2-enyl diphosphate. H127 serves as a coordination point for dimethylallyl diphosphate. Isopentenyl diphosphate is bound at residue H127. Residue E129 is the Proton donor of the active site. Residue T163 participates in (2E)-4-hydroxy-3-methylbut-2-enyl diphosphate binding. A [4Fe-4S] cluster-binding site is contributed by C191. (2E)-4-hydroxy-3-methylbut-2-enyl diphosphate-binding residues include S219, S220, N221, and S263. Dimethylallyl diphosphate contacts are provided by S219, S220, N221, and S263. Residues S219, S220, N221, and S263 each contribute to the isopentenyl diphosphate site. S1 motif domains follow at residues G298–E373, K380–R455, D476–K544, and G561–K630.

It in the N-terminal section; belongs to the IspH family. It depends on [4Fe-4S] cluster as a cofactor.

It catalyses the reaction isopentenyl diphosphate + 2 oxidized [2Fe-2S]-[ferredoxin] + H2O = (2E)-4-hydroxy-3-methylbut-2-enyl diphosphate + 2 reduced [2Fe-2S]-[ferredoxin] + 2 H(+). The catalysed reaction is dimethylallyl diphosphate + 2 oxidized [2Fe-2S]-[ferredoxin] + H2O = (2E)-4-hydroxy-3-methylbut-2-enyl diphosphate + 2 reduced [2Fe-2S]-[ferredoxin] + 2 H(+). The protein operates within isoprenoid biosynthesis; dimethylallyl diphosphate biosynthesis; dimethylallyl diphosphate from (2E)-4-hydroxy-3-methylbutenyl diphosphate: step 1/1. It functions in the pathway isoprenoid biosynthesis; isopentenyl diphosphate biosynthesis via DXP pathway; isopentenyl diphosphate from 1-deoxy-D-xylulose 5-phosphate: step 6/6. Catalyzes the conversion of 1-hydroxy-2-methyl-2-(E)-butenyl 4-diphosphate (HMBPP) into a mixture of isopentenyl diphosphate (IPP) and dimethylallyl diphosphate (DMAPP). Acts in the terminal step of the DOXP/MEP pathway for isoprenoid precursor biosynthesis. The polypeptide is 4-hydroxy-3-methylbut-2-enyl diphosphate reductase (Clostridium tetani (strain Massachusetts / E88)).